A 759-amino-acid polypeptide reads, in one-letter code: NADP-dependent malic enzyme (759 aa).

Residues 1–428 are malic enzyme; sequence MDEQLKQSAL…KLTEFVYKTN (428 aa). Catalysis depends on tyrosine 39, which acts as the Proton donor. Lysine 94 acts as the Proton acceptor in catalysis. The a divalent metal cation site is built by glutamate 136, aspartate 137, and aspartate 162. NADP(+)-binding positions include 195-198, asparagine 288, and asparagine 320; that span reads AGAA. Residues 429-759 are phosphate acetyltransferase; it reads LFMKPIFSQA…AVVEAQTTPL (331 aa).

This sequence in the N-terminal section; belongs to the malic enzymes family. In the C-terminal section; belongs to the phosphate acetyltransferase and butyryltransferase family. It depends on Mg(2+) as a cofactor. The cofactor is Mn(2+).

The catalysed reaction is (S)-malate + NADP(+) = pyruvate + CO2 + NADPH. It catalyses the reaction oxaloacetate + H(+) = pyruvate + CO2. This Salmonella typhimurium (strain LT2 / SGSC1412 / ATCC 700720) protein is NADP-dependent malic enzyme (maeB).